The primary structure comprises 182 residues: uncharacterized protein (182 aa).

Residues 1 to 177 (MEFSVGGVEV…KFLEVFKKHL (177 aa)) form the Macro domain.

This is an uncharacterized protein from Pyrobaculum aerophilum (strain ATCC 51768 / DSM 7523 / JCM 9630 / CIP 104966 / NBRC 100827 / IM2).